The chain runs to 325 residues: Large ribosomal subunit protein uL4m (325 aa).

Residues 113 to 158 (ASTKTRYEVHGSHKKMSPQKGTGNARRGTRQSPLMKGGGKTFGPKP) are disordered.

This sequence belongs to the universal ribosomal protein uL4 family. Component of the mitochondrial large ribosomal subunit (mt-LSU). Mature N.crassa 74S mitochondrial ribosomes consist of a small (37S) and a large (54S) subunit. The 37S small subunit contains a 16S ribosomal RNA (16S mt-rRNA) and 32 different proteins. The 54S large subunit contains a 23S rRNA (23S mt-rRNA) and 42 different proteins.

It localises to the mitochondrion. Component of the mitochondrial ribosome (mitoribosome), a dedicated translation machinery responsible for the synthesis of mitochondrial genome-encoded proteins, including at least some of the essential transmembrane subunits of the mitochondrial respiratory chain. The mitoribosomes are attached to the mitochondrial inner membrane and translation products are cotranslationally integrated into the membrane. The polypeptide is Large ribosomal subunit protein uL4m (yml6) (Neurospora crassa (strain ATCC 24698 / 74-OR23-1A / CBS 708.71 / DSM 1257 / FGSC 987)).